The following is a 134-amino-acid chain: Small ribosomal subunit protein uS8 (134 aa).

This sequence belongs to the universal ribosomal protein uS8 family. Part of the 30S ribosomal subunit. Contacts proteins S5 and S12.

In terms of biological role, one of the primary rRNA binding proteins, it binds directly to 16S rRNA central domain where it helps coordinate assembly of the platform of the 30S subunit. This Synechococcus sp. (strain JA-3-3Ab) (Cyanobacteria bacterium Yellowstone A-Prime) protein is Small ribosomal subunit protein uS8.